A 1374-amino-acid polypeptide reads, in one-letter code: Y' element ATP-dependent helicase YML133C (1374 aa).

One can recognise a Helicase ATP-binding domain in the interval 375–552 (EIYMADTPSV…LQRIGLTGLA (178 aa)). 388–395 (APPGYGKT) contacts ATP. Positions 609–758 (KLLLALFEIE…EFYGLESKKG (150 aa)) constitute a Helicase C-terminal domain. Low complexity predominate over residues 832-975 (ANASTNATTN…ATTTESTNAS (144 aa)). Residues 832–999 (ANASTNATTN…RFHPVTDINK (168 aa)) are disordered. Over residues 976 to 999 (AKEDANKDGNAEDNRFHPVTDINK) the composition is skewed to basic and acidic residues.

The protein belongs to the helicase family. Yeast subtelomeric Y' repeat subfamily.

Its function is as follows. Catalyzes DNA unwinding and is involved in telomerase-independent telomere maintenance. In Saccharomyces cerevisiae (strain ATCC 204508 / S288c) (Baker's yeast), this protein is Y' element ATP-dependent helicase YML133C.